Reading from the N-terminus, the 230-residue chain is 7-cyano-7-deazaguanine synthase (230 aa).

8-18 serves as a coordination point for ATP; the sequence is FSGGQDSTTCL. Zn(2+)-binding residues include Cys-187, Cys-196, Cys-199, and Cys-202.

The protein belongs to the QueC family. Zn(2+) serves as cofactor.

The enzyme catalyses 7-carboxy-7-deazaguanine + NH4(+) + ATP = 7-cyano-7-deazaguanine + ADP + phosphate + H2O + H(+). It functions in the pathway purine metabolism; 7-cyano-7-deazaguanine biosynthesis. Its function is as follows. Catalyzes the ATP-dependent conversion of 7-carboxy-7-deazaguanine (CDG) to 7-cyano-7-deazaguanine (preQ(0)). In Shewanella amazonensis (strain ATCC BAA-1098 / SB2B), this protein is 7-cyano-7-deazaguanine synthase.